Here is a 171-residue protein sequence, read N- to C-terminus: MLCLGLSGRLSRVYENSFDLPNSFMHNGAAVRVRDGRVIAAVEEERPNRIKHSNTLPIRSIQYCLASAGVQLSDIDRIAYYATEAYCNAVLERVRLSHPSTPVSDARLLQRARGGRHGLYIPVGHPDVPCDRHRHTDLAAHWTRDGTMPWRLSPALHRRDELENVGPGIDC.

This is an uncharacterized protein from Rhizobium etli.